Consider the following 944-residue polypeptide: Translation initiation factor IF-2 (944 aa).

A compositionally biased stretch (low complexity) spans 55–81; the sequence is LTGQAAAPAAAPSSAPRPGARSSAPKP. The segment at 55–329 is disordered; it reads LTGQAAAPAA…RTKRAEFELR (275 aa). The span at 82–92 shows a compositional bias: pro residues; that stretch reads GGRPTPGPQPT. Low complexity predominate over residues 93 to 107; it reads AAPEVEAPEASDVPV. Basic and acidic residues predominate over residues 123-135; the sequence is ASRKAAAEEKAQA. Low complexity-rich tracts occupy residues 136–153 and 211–222; these read EKSA…ETPS and GQRPAAGAAGPR. Residues 223–236 show a composition bias toward pro residues; it reads PAAPRPGSPRPGAP. The span at 244-257 shows a compositional bias: low complexity; sequence GARPAGFGQRPAGA. Gly residues predominate over residues 258-269; sequence GRPGGAPGGAGR. Positions 270–283 are enriched in low complexity; the sequence is PGAPAAGGFQRPAG. Gly residues predominate over residues 284–310; it reads GFAGRPGGGGRGRGPGGGTAGAFGRGG. Over residues 311 to 322 the composition is skewed to basic residues; it reads GKSKSRKSKRTK. The tr-type G domain occupies 437 to 611; sequence IRPPVVTVMG…LTADAGLDLR (175 aa). The tract at residues 446–453 is G1; it reads GHVDHGKT. Position 446 to 453 (446 to 453) interacts with GTP; sequence GHVDHGKT. Residues 471–475 are G2; sequence GITQH. The interval 496 to 499 is G3; the sequence is DTPG. Residues 496-500 and 550-553 each bind GTP; these read DTPGH and NKVD. A G4 region spans residues 550–553; sequence NKVD. Residues 586–588 form a G5 region; that stretch reads SAL.

It belongs to the TRAFAC class translation factor GTPase superfamily. Classic translation factor GTPase family. IF-2 subfamily.

The protein resides in the cytoplasm. Functionally, one of the essential components for the initiation of protein synthesis. Protects formylmethionyl-tRNA from spontaneous hydrolysis and promotes its binding to the 30S ribosomal subunits. Also involved in the hydrolysis of GTP during the formation of the 70S ribosomal complex. In Clavibacter michiganensis subsp. michiganensis (strain NCPPB 382), this protein is Translation initiation factor IF-2.